The primary structure comprises 979 residues: Zinc finger BED domain-containing protein 6 (979 aa).

Positions 1–89 (MSVCTLSVPV…ILAKKFSKDL (89 aa)) are required for nucleolar localization. The BED-type 1 zinc finger occupies 130–187 (AKTSIVWHFFHVDPQYTWRAICNLCEKSVSRGKPGSHLGTSTLQRHLQARHSPHWTRA). Zn(2+) is bound by residues cysteine 151, cysteine 154, histidine 175, and histidine 180. The tract at residues 207-232 (PSSGSNGSFEYIPTDPLDDNRMGKKH) is disordered. A BED-type 2 zinc finger spans residues 264–321 (AKTSAVWNFFYTDPQHISRAVCNICKRSVSRGRPGSHLGTSTLQRHLQATHPIHWAVA). Zn(2+)-binding residues include cysteine 285, cysteine 288, histidine 309, and histidine 314. The segment at 333-383 (DEAETERSDLLSDTLHGEKSTGSQDLTAEDLSDSDSDEPMLEVENRSESPI) is disordered. The segment covering 337–351 (TERSDLLSDTLHGEK) has biased composition (basic and acidic residues). Positions 359 to 373 (TAEDLSDSDSDEPML) are enriched in acidic residues. Position 381 is a phosphoserine (serine 381). The segment at 866 to 948 (VVDEYFKEKY…EQLMFLKMNL (83 aa)) is HATC (Hobo-Ac-Tam3) domain.

As to expression, expressed in pancreatic islet cells (at protein level).

It localises to the nucleus. The protein localises to the nucleolus. Its subcellular location is the cytoplasm. Its function is as follows. Transcriptional repressor which binds to the consensus sequence 5'-GCTCGC-3', transcription regulation may be tissue-specific. Regulates the expression of target genes such as: IGF2, PGAP6/TMEM8, ENHO, and PIANP. Acts as a transcriptional repressor of growth factor IGF2, thereby negatively regulating postnatal growth of muscles and internal organs, especially in females. Negatively regulates myoblast differentiation and myoblast mitochondrial activity via its regulation of IGF2 transcription. Negatively regulates the cell cycle of myoblasts, potentially via transcriptional regulation of the E2F family of transcription factors such as: E2F1 and E2F2. Positively regulates the cell cycle and survival of pancreatic beta cells. Binds to the CDH2 gene and may directly repress CDH2 transcription. Probably by controlling CDH2 expression, regulates pancreatic beta cell adhesion, and formation of cell-to-cell junctions between pancreatic beta cells and neural crest stem cells. May also play a role in embryonic beta cell differentiation. May play a role in insulin sensitivity and glucose clearance. In Homo sapiens (Human), this protein is Zinc finger BED domain-containing protein 6.